Here is a 171-residue protein sequence, read N- to C-terminus: Shikimate kinase (171 aa).

14–19 (GAGKST) provides a ligand contact to ATP. Ser-18 serves as a coordination point for Mg(2+). Residues Asp-36, Arg-60, and Gly-82 each coordinate substrate. Arg-120 serves as a coordination point for ATP. Arg-139 contributes to the substrate binding site. Gln-156 is a binding site for ATP.

The protein belongs to the shikimate kinase family. In terms of assembly, monomer. The cofactor is Mg(2+).

The protein resides in the cytoplasm. The enzyme catalyses shikimate + ATP = 3-phosphoshikimate + ADP + H(+). The protein operates within metabolic intermediate biosynthesis; chorismate biosynthesis; chorismate from D-erythrose 4-phosphate and phosphoenolpyruvate: step 5/7. Functionally, catalyzes the specific phosphorylation of the 3-hydroxyl group of shikimic acid using ATP as a cosubstrate. The protein is Shikimate kinase of Shewanella baltica (strain OS195).